An 89-amino-acid polypeptide reads, in one-letter code: Small ribosomal subunit protein uS15 (89 aa).

The protein belongs to the universal ribosomal protein uS15 family. As to quaternary structure, part of the 30S ribosomal subunit. Forms a bridge to the 50S subunit in the 70S ribosome, contacting the 23S rRNA.

One of the primary rRNA binding proteins, it binds directly to 16S rRNA where it helps nucleate assembly of the platform of the 30S subunit by binding and bridging several RNA helices of the 16S rRNA. In terms of biological role, forms an intersubunit bridge (bridge B4) with the 23S rRNA of the 50S subunit in the ribosome. This Geobacillus thermodenitrificans (strain NG80-2) protein is Small ribosomal subunit protein uS15.